We begin with the raw amino-acid sequence, 450 residues long: Signal recognition particle 54 kDa protein (450 aa).

GTP contacts are provided by residues 107–114 (GIQGSGKT), 188–192 (DTAGR), and 247–250 (TKLD).

The protein belongs to the GTP-binding SRP family. SRP54 subfamily. Part of the signal recognition particle protein translocation system, which is composed of SRP and FtsY. Archaeal SRP consists of a 7S RNA molecule of 300 nucleotides and two protein subunits: SRP54 and SRP19.

It is found in the cytoplasm. The catalysed reaction is GTP + H2O = GDP + phosphate + H(+). Involved in targeting and insertion of nascent membrane proteins into the cytoplasmic membrane. Binds to the hydrophobic signal sequence of the ribosome-nascent chain (RNC) as it emerges from the ribosomes. The SRP-RNC complex is then targeted to the cytoplasmic membrane where it interacts with the SRP receptor FtsY. This Methanococcus maripaludis (strain C6 / ATCC BAA-1332) protein is Signal recognition particle 54 kDa protein.